The chain runs to 465 residues: Pancreatic triacylglycerol lipase (465 aa).

The first 16 residues, 1–16 (MLLVWSLALLLGAVAG), serve as a signal peptide directing secretion. Disulfide bonds link cysteine 20/cysteine 26 and cysteine 107/cysteine 118. Serine 169 functions as the Nucleophile in the catalytic mechanism. The Charge relay system role is filled by aspartate 193. Glutamate 204, arginine 207, aspartate 209, and aspartate 212 together coordinate Ca(2+). A disulfide bridge links cysteine 254 with cysteine 278. Residue histidine 280 is the Charge relay system of the active site. 3 disulfides stabilise this stretch: cysteine 302-cysteine 313, cysteine 316-cysteine 321, and cysteine 449-cysteine 465. The 111-residue stretch at 355-465 (WRYKVSVTLS…EDVLLTLNAC (111 aa)) folds into the PLAT domain.

The protein belongs to the AB hydrolase superfamily. Lipase family. As to quaternary structure, forms a 1:1 stoichiometric complex with (pro)colipase/CLPS. Expressed in many tissues with highest expression in liver. During hibernation there is a significant increases in expression in heart, white adipose tissue (WAT), and testis; but not in pancreas.

The protein resides in the secreted. It catalyses the reaction a triacylglycerol + H2O = a diacylglycerol + a fatty acid + H(+). The enzyme catalyses 1,2,3-tributanoylglycerol + H2O = dibutanoylglycerol + butanoate + H(+). The catalysed reaction is 1,2,3-tri-(9Z-octadecenoyl)-glycerol + H2O = di-(9Z)-octadecenoylglycerol + (9Z)-octadecenoate + H(+). It carries out the reaction all-trans-retinyl hexadecanoate + H2O = all-trans-retinol + hexadecanoate + H(+). It catalyses the reaction 1,2-di-(9Z-octadecenoyl)-glycerol + H2O = (9Z-octadecenoyl)-glycerol + (9Z)-octadecenoate + H(+). Its activity is regulated as follows. Inhibited by bile salts, is reactivated by (pro)colipase/CLPS. Functionally, plays an important role in fat metabolism. It preferentially splits the esters of long-chain fatty acids at positions 1 and 3, producing mainly 2-monoacylglycerol and free fatty acids, and shows considerably higher activity against insoluble emulsified substrates than against soluble ones. Plays a role in hibernation as a key enzyme that shows high activity at low temperatures. When expressed in the hibernating heart it liberates fatty acids from triglycerides at temperatures as low as 0 degrees Celsius. This chain is Pancreatic triacylglycerol lipase (PNLIP), found in Ictidomys tridecemlineatus (Thirteen-lined ground squirrel).